We begin with the raw amino-acid sequence, 313 residues long: Phenylalanine-4-hydroxylase (313 aa).

The Fe cation site is built by His154, His159, and Glu200.

It belongs to the biopterin-dependent aromatic amino acid hydroxylase family. Requires Fe(2+) as cofactor.

The enzyme catalyses (6R)-L-erythro-5,6,7,8-tetrahydrobiopterin + L-phenylalanine + O2 = (4aS,6R)-4a-hydroxy-L-erythro-5,6,7,8-tetrahydrobiopterin + L-tyrosine. It functions in the pathway amino-acid degradation; L-phenylalanine degradation; acetoacetate and fumarate from L-phenylalanine: step 1/6. This chain is Phenylalanine-4-hydroxylase (phhA), found in Ralstonia nicotianae (strain ATCC BAA-1114 / GMI1000) (Ralstonia solanacearum).